Reading from the N-terminus, the 234-residue chain is Probable plastid-lipid-associated protein 5, chloroplastic (234 aa).

The N-terminal 45 residues, 1 to 45, are a transit peptide targeting the chloroplast; sequence MALPWCLKTGVLTSPAAGFNHPSDSGFAVPTKLLSIRKGDRERLR.

It belongs to the PAP/fibrillin family.

Its subcellular location is the plastid. It is found in the chloroplast thylakoid. The protein is Probable plastid-lipid-associated protein 5, chloroplastic (PAP5) of Arabidopsis thaliana (Mouse-ear cress).